Reading from the N-terminus, the 497-residue chain is Probable cytosol aminopeptidase (497 aa).

Positions 265 and 270 each coordinate Mn(2+). The active site involves Lys277. Residues Asp288, Asp347, and Glu349 each contribute to the Mn(2+) site. Arg351 is an active-site residue.

It belongs to the peptidase M17 family. It depends on Mn(2+) as a cofactor.

The protein localises to the cytoplasm. It carries out the reaction Release of an N-terminal amino acid, Xaa-|-Yaa-, in which Xaa is preferably Leu, but may be other amino acids including Pro although not Arg or Lys, and Yaa may be Pro. Amino acid amides and methyl esters are also readily hydrolyzed, but rates on arylamides are exceedingly low.. The enzyme catalyses Release of an N-terminal amino acid, preferentially leucine, but not glutamic or aspartic acids.. Functionally, presumably involved in the processing and regular turnover of intracellular proteins. Catalyzes the removal of unsubstituted N-terminal amino acids from various peptides. The polypeptide is Probable cytosol aminopeptidase (Geobacillus sp. (strain WCH70)).